The sequence spans 87 residues: Small ribosomal subunit protein bS20 (87 aa).

Residues 1–22 (MANSAQARKRARQAVKQRAHNA) are disordered. The segment covering 7-19 (ARKRARQAVKQRA) has biased composition (basic residues).

It belongs to the bacterial ribosomal protein bS20 family.

In terms of biological role, binds directly to 16S ribosomal RNA. This Methylobacillus flagellatus (strain ATCC 51484 / DSM 6875 / VKM B-1610 / KT) protein is Small ribosomal subunit protein bS20.